We begin with the raw amino-acid sequence, 520 residues long: 5'-nucleotidase domain-containing protein 2 (520 aa).

D73 serves as the catalytic Nucleophile. Positions 73, 75, and 358 each coordinate Mg(2+). D75 (proton donor) is an active-site residue.

Belongs to the 5'(3')-deoxyribonucleotidase family. As to quaternary structure, interacts with tyrosine 3-monooxygenase TH; the interaction results in reduced phosphorylation and decreased catalytic activity of TH.

It localises to the cytoplasm. Promotes dephosphorylation of tyrosine 3-monooxygenase TH which decreases TH catalytic activity and leads to reduced synthesis of catecholamines including dopamine, noradrenaline and adrenaline. The exact mechanism of activity is unknown but may act as a phosphatase or promote the activity of phosphatases or may inhibit phosphorylation by acting as a barrier to interfere with protein kinase access. The polypeptide is 5'-nucleotidase domain-containing protein 2 (NT5DC2) (Homo sapiens (Human)).